Here is a 158-residue protein sequence, read N- to C-terminus: C-type lectin lectoxin-Thr1 (158 aa).

The N-terminal stretch at 1–23 is a signal peptide; sequence MGRFIFATLGLLLVAFSINGAKG. 3 cysteine pairs are disulfide-bonded: Cys-26/Cys-37, Cys-54/Cys-154, and Cys-129/Cys-146. Positions 33–155 constitute a C-type lectin domain; sequence LKGFCYKVFN…CASTRAYLCK (123 aa). A Mannose-binding motif is present at residues 119–121; sequence EPN. Positions 127, 142, and 143 each coordinate Ca(2+).

It belongs to the true venom lectin family. As to expression, expressed by the venom gland.

The protein localises to the secreted. In terms of biological role, mannose-binding lectin which recognizes specific carbohydrate structures and agglutinates a variety of animal cells by binding to cell-surface glycoproteins and glycolipids. May be a calcium-dependent lectin. The protein is C-type lectin lectoxin-Thr1 of Thrasops jacksonii (Jackson's black tree snake).